The sequence spans 111 residues: uncharacterized protein (111 aa).

The next 4 membrane-spanning stretches (helical) occupy residues 3–23 (WVLV…LKHA), 24–44 (DSLL…ILLI), 54–74 (AAYT…GIVL), and 80–100 (AAQM…KLFT).

It belongs to the drug/metabolite transporter (DMT) superfamily. Small multidrug resistance (SMR) (TC 2.A.7.1) family.

It is found in the cell membrane. This is an uncharacterized protein from Bacillus subtilis (strain 168).